A 512-amino-acid chain; its full sequence is Cytochrome P450 monooxygenase FrzL (512 aa).

The chain crosses the membrane as a helical span at residues 6–26 (TMLAFVPYLAVFVACYGLVYY). A heme-binding site is contributed by Cys423.

It belongs to the cytochrome P450 family. Requires heme as cofactor.

Its subcellular location is the membrane. Cytochrome P450 monooxygenase; part of the gene cluster that mediates the biosynthesis of the alkaloid (-)-FR901483, a potent immunosuppressant that shows efficacy in animal models and a probable inhibitor of purine nucleotide biosynthesis by targeting phosphoribosylpyrophosphate amidotransferase (PPAT). The only unassigned enzyme in the cluster is the second cytochrome P450 monooxygenase FrzL. The biosynthesis of (-)-FR901483 starts with the condensation of two L-tyrosines to yield (S,S)-dityrosyl-piperazine. This process occurs in 3 steps with the non-canonical nonribosomal peptide synthetase FrzA catalyzing the reduction of L-tyrosine into L-tyrosinal, the spontaneous condensation of 2 L-tyrosinal units, and the subsequent reduction by the NmrA-like family domain-containing oxidoreductase FrzB. The cytochrome P450 monooxygenase FrzC then performs coupling between N10 and C1' to morph the piperazine into a 1,4-diazabicyclo[3.2.1]octane spiro-fused to a 2,5-cyclohexadienone. The dienone portion is further reduced to cyclohexanone by the flavin-dependent reductase FrzD. The methyltranserases (MTs) FrzE and FrzF are then involved in the methylation at the C10' amine and the C4 phenolic oxygen, respectively. The order of the two MTs appear to be interchangeable. Cleavage of the C9-N10' bond by the dioxygenase FrzG then leads to formation of a conjugated iminium. In addition to the oxidation of C9, an additional dehydrogenation between C7 and C8 can occur to give a likely shunt product. The next biosynthetic step is the intramolecular aldol condensation catalyzed by the newly identified aldolase FrzH to yield an aza-tricyclic product with the formation of a C9-C3' bond. The short-chain dehydrogenase/reductase FrzI then produces dephospho-(-)-FR901483 that is phosphorylated at C4'-OH into (-)-FR901483 by the phosphotransferase FrzJ. The sequence is that of Cytochrome P450 monooxygenase FrzL from Cladobotryum sp.